The primary structure comprises 200 residues: Protein GrpE (200 aa).

The segment covering Met1 to Asn11 has biased composition (polar residues). The interval Met1–Ala29 is disordered.

This sequence belongs to the GrpE family. In terms of assembly, homodimer.

It is found in the cytoplasm. Participates actively in the response to hyperosmotic and heat shock by preventing the aggregation of stress-denatured proteins, in association with DnaK and GrpE. It is the nucleotide exchange factor for DnaK and may function as a thermosensor. Unfolded proteins bind initially to DnaJ; upon interaction with the DnaJ-bound protein, DnaK hydrolyzes its bound ATP, resulting in the formation of a stable complex. GrpE releases ADP from DnaK; ATP binding to DnaK triggers the release of the substrate protein, thus completing the reaction cycle. Several rounds of ATP-dependent interactions between DnaJ, DnaK and GrpE are required for fully efficient folding. In Shewanella halifaxensis (strain HAW-EB4), this protein is Protein GrpE.